The chain runs to 290 residues: MHSKPTWLRAKAPAGKVFNETLNTVKLHNLHTVCEEAACPNIGECWNKRHATVMILGSVCTRACAFCNVATGIPDKLDPHEPENLAKAIKKLNLKHVVITSVDRDDLSDGGANQFIRCIEEIRKITSETTIEILTPDFLNKKGAFEAIAIASPDVYNHNIETVPRLYAKIRPRARYFHSLYLLKMVKQINPKLFTKSGLMVGLGETKEEIFQVMDDLRSAEVDFITIGQYLQPTPKHAKIDRYVTPEEFEHYKYIAYSKGFLVVASSPLTRSSYHAEEDFNRLAAAKTST.

Residues Cys-34, Cys-39, Cys-45, Cys-60, Cys-64, Cys-67, and Ser-273 each contribute to the [4Fe-4S] cluster site. Residues 46-262 (WNKRHATVMI…KYIAYSKGFL (217 aa)) form the Radical SAM core domain.

It belongs to the radical SAM superfamily. Lipoyl synthase family. Requires [4Fe-4S] cluster as cofactor.

It localises to the cytoplasm. It carries out the reaction [[Fe-S] cluster scaffold protein carrying a second [4Fe-4S](2+) cluster] + N(6)-octanoyl-L-lysyl-[protein] + 2 oxidized [2Fe-2S]-[ferredoxin] + 2 S-adenosyl-L-methionine + 4 H(+) = [[Fe-S] cluster scaffold protein] + N(6)-[(R)-dihydrolipoyl]-L-lysyl-[protein] + 4 Fe(3+) + 2 hydrogen sulfide + 2 5'-deoxyadenosine + 2 L-methionine + 2 reduced [2Fe-2S]-[ferredoxin]. It participates in protein modification; protein lipoylation via endogenous pathway; protein N(6)-(lipoyl)lysine from octanoyl-[acyl-carrier-protein]: step 2/2. Its function is as follows. Catalyzes the radical-mediated insertion of two sulfur atoms into the C-6 and C-8 positions of the octanoyl moiety bound to the lipoyl domains of lipoate-dependent enzymes, thereby converting the octanoylated domains into lipoylated derivatives. This is Lipoyl synthase from Wolbachia pipientis subsp. Culex pipiens (strain wPip).